The following is a 256-amino-acid chain: Large ribosomal subunit protein uL2 (256 aa).

The disordered stretch occupies residues 208–230; sequence EHPHGGGNHQHIGKASTVKRGTS.

This sequence belongs to the universal ribosomal protein uL2 family. As to expression, in larvae tissues examined: gut, brain imaginal disk, salivary glands, fat body, muscles, epidermis and trachaea.

The protein resides in the cytoplasm. This chain is Large ribosomal subunit protein uL2 (RpL8), found in Drosophila melanogaster (Fruit fly).